The following is a 554-amino-acid chain: DNA ligase B (554 aa).

The N6-AMP-lysine intermediate role is filled by K122.

The protein belongs to the NAD-dependent DNA ligase family. LigB subfamily.

It catalyses the reaction NAD(+) + (deoxyribonucleotide)n-3'-hydroxyl + 5'-phospho-(deoxyribonucleotide)m = (deoxyribonucleotide)n+m + AMP + beta-nicotinamide D-nucleotide.. Functionally, catalyzes the formation of phosphodiester linkages between 5'-phosphoryl and 3'-hydroxyl groups in double-stranded DNA using NAD as a coenzyme and as the energy source for the reaction. In Pseudomonas fluorescens (strain SBW25), this protein is DNA ligase B.